A 66-amino-acid chain; its full sequence is MNNSMINPSIVDLLTKVGDRYSLVILTSKRAREIIEGAEPLTKVDSHKPLTIAINEVNEDIVKYEE.

The protein belongs to the RNA polymerase subunit omega family. The RNAP catalytic core consists of 2 alpha, 1 beta, 1 beta' and 1 omega subunit. When a sigma factor is associated with the core the holoenzyme is formed, which can initiate transcription.

The catalysed reaction is RNA(n) + a ribonucleoside 5'-triphosphate = RNA(n+1) + diphosphate. In terms of biological role, promotes RNA polymerase assembly. Latches the N- and C-terminal regions of the beta' subunit thereby facilitating its interaction with the beta and alpha subunits. The polypeptide is DNA-directed RNA polymerase subunit omega (Clostridium botulinum (strain Eklund 17B / Type B)).